Reading from the N-terminus, the 339-residue chain is MTARAFWLLCLIVGSSPEAPVAERKTSPPHSRKPDSRGCPSAEETPGPRAQPLLEAPQRPRAAEVAPAARAWPDPRRRKPPPPADNQASFREAARAPAGPPGPRLAQAENRASPRREPASEDAPRRARSRALRFPAARPPALATEGSAGHAHPNRPRAAALAPGPAPAPPPRFSLSFGLSPPQRDAEPGAEPCARACRSDLDEREAFCESEFAVNGIVHDVDVLGAGIRLVTLLVDRDGLYKMNRLYLTPDGFFFRVHMLALDSSSCNKPCPEFKPGSRYIVMGHIYHKRRQLPTALLQVLRGRLRPGDGLLRSSSSYVKRFNRKREGQIQGAIHTQCI.

Positions 1 to 17 are cleaved as a signal peptide; sequence MTARAFWLLCLIVGSSP. The tract at residues 17–191 is disordered; sequence PEAPVAERKT…PQRDAEPGAE (175 aa). The segment covering 21–36 has biased composition (basic and acidic residues); the sequence is VAERKTSPPHSRKPDS. The span at 56 to 72 shows a compositional bias: low complexity; it reads APQRPRAAEVAPAARAW. A compositionally biased stretch (basic and acidic residues) spans 112–125; the sequence is ASPRREPASEDAPR. The span at 132 to 163 shows a compositional bias: low complexity; that stretch reads LRFPAARPPALATEGSAGHAHPNRPRAAALAP. 3 disulfide bridges follow: C193–C267, C197–C271, and C208–C338. The NTR domain maps to 193–338; it reads CARACRSDLD…QIQGAIHTQC (146 aa).

It belongs to the UPF0450 family.

In Homo sapiens (Human), this protein is UPF0450 protein C17orf58 (C17orf58).